A 247-amino-acid polypeptide reads, in one-letter code: Probable transcriptional regulatory protein BHWA1_01533 (247 aa).

The interval 1-22 (MSGHSKWASIKHKKAANDSKKG) is disordered.

It belongs to the TACO1 family.

The protein localises to the cytoplasm. The chain is Probable transcriptional regulatory protein BHWA1_01533 from Brachyspira hyodysenteriae (strain ATCC 49526 / WA1).